We begin with the raw amino-acid sequence, 183 residues long: Adenylate kinase (183 aa).

12–17 is an ATP binding site; the sequence is GAGKGT. The tract at residues 32–61 is NMP; sequence STGDLLRSEVAAGSELGKEAEAVMNRGELV. AMP-binding positions include T33, R38, 59 to 61, 86 to 89, and Q93; these read ELV and GFPR. The tract at residues 127 to 133 is LID; that stretch reads SRGRADD. An ATP-binding site is contributed by R128. Residues R130 and R141 each coordinate AMP. G169 provides a ligand contact to ATP.

It belongs to the adenylate kinase family. In terms of assembly, monomer.

It localises to the cytoplasm. It carries out the reaction AMP + ATP = 2 ADP. The protein operates within purine metabolism; AMP biosynthesis via salvage pathway; AMP from ADP: step 1/1. Catalyzes the reversible transfer of the terminal phosphate group between ATP and AMP. Plays an important role in cellular energy homeostasis and in adenine nucleotide metabolism. The protein is Adenylate kinase of Synechococcus sp. (strain CC9902).